A 366-amino-acid chain; its full sequence is 3-dehydroquinate synthase (366 aa).

Residues 69-74, 103-107, 127-128, K140, and K149 each bind NAD(+); these read DGEAFK, GVIGD, and TT. Zn(2+) is bound by residues E182, H245, and H262.

The protein belongs to the sugar phosphate cyclases superfamily. Dehydroquinate synthase family. Co(2+) is required as a cofactor. Requires Zn(2+) as cofactor. It depends on NAD(+) as a cofactor.

Its subcellular location is the cytoplasm. It catalyses the reaction 7-phospho-2-dehydro-3-deoxy-D-arabino-heptonate = 3-dehydroquinate + phosphate. The protein operates within metabolic intermediate biosynthesis; chorismate biosynthesis; chorismate from D-erythrose 4-phosphate and phosphoenolpyruvate: step 2/7. Its function is as follows. Catalyzes the conversion of 3-deoxy-D-arabino-heptulosonate 7-phosphate (DAHP) to dehydroquinate (DHQ). This chain is 3-dehydroquinate synthase, found in Pseudomonas fluorescens (strain Pf0-1).